Reading from the N-terminus, the 513-residue chain is Aspartyl protease family protein 1 (513 aa).

Residues 1–21 (MVWYSSCRILFLGLLILLASS) form the signal peptide. The 342-residue stretch at 104–445 (HYANVTVGTP…DREKLILGWK (342 aa)) folds into the Peptidase A1 domain. Residues Asp-122 and Asp-327 contribute to the active site. Residues 452–488 (GETSARTLPSNRSSSSARPPASSFDPEATNIPSQRPN) are disordered. A compositionally biased stretch (low complexity) spans 455–474 (SARTLPSNRSSSSARPPASS). Ser-484 carries the GPI-anchor amidated serine lipid modification. The propeptide at 485 to 513 (QRPNTSTTSAAYSLSISLSLFFFSILAIL) is removed in mature form.

Belongs to the peptidase A1 family.

It localises to the cell membrane. Aspartyl protease. Not able to cleave BAG6. The protein is Aspartyl protease family protein 1 of Arabidopsis thaliana (Mouse-ear cress).